The chain runs to 260 residues: Aliphatic sulfonates import ATP-binding protein SsuB 1 (260 aa).

Positions 29–243 (VRVDGLTRSF…DITDPRFAEL (215 aa)) constitute an ABC transporter domain. Residue 61-68 (GRSGCGKS) coordinates ATP.

It belongs to the ABC transporter superfamily. Aliphatic sulfonates importer (TC 3.A.1.17.2) family. As to quaternary structure, the complex is composed of two ATP-binding proteins (SsuB), two transmembrane proteins (SsuC) and a solute-binding protein (SsuA).

It is found in the cell membrane. The catalysed reaction is ATP + H2O + aliphatic sulfonate-[sulfonate-binding protein]Side 1 = ADP + phosphate + aliphatic sulfonateSide 2 + [sulfonate-binding protein]Side 1.. In terms of biological role, part of the ABC transporter complex SsuABC involved in aliphatic sulfonates import. Responsible for energy coupling to the transport system. This chain is Aliphatic sulfonates import ATP-binding protein SsuB 1, found in Streptomyces avermitilis (strain ATCC 31267 / DSM 46492 / JCM 5070 / NBRC 14893 / NCIMB 12804 / NRRL 8165 / MA-4680).